A 556-amino-acid polypeptide reads, in one-letter code: Peptide chain release factor 3 (556 aa).

Residues 28–297 (QQRRNFAIIS…AFLDYALKPG (270 aa)) enclose the tr-type G domain. GTP-binding positions include 37 to 44 (SHPDAGKT), 105 to 109 (DTPGH), and 159 to 162 (NKMD).

The protein belongs to the TRAFAC class translation factor GTPase superfamily. Classic translation factor GTPase family. PrfC subfamily.

The protein localises to the cytoplasm. Its function is as follows. Increases the formation of ribosomal termination complexes and stimulates activities of RF-1 and RF-2. It binds guanine nucleotides and has strong preference for UGA stop codons. It may interact directly with the ribosome. The stimulation of RF-1 and RF-2 is significantly reduced by GTP and GDP, but not by GMP. The chain is Peptide chain release factor 3 from Synechococcus elongatus (strain ATCC 33912 / PCC 7942 / FACHB-805) (Anacystis nidulans R2).